A 567-amino-acid polypeptide reads, in one-letter code: MSAWRIRVLATLCFLWQPRVHGQLPPPQNVTLLSKDFDMILTWTPGEGSPPDVLYTVRYESKTRMDKWIKVPHCRNIHSVSCNLTCVIPNFFIKFRAQVKATSGRFHSPWVKSQFKEYHLDVELAPPLLNVNVKENVIHVNATFPMAICVESLPWMYDFNLWEAGSEDKKQYKSIFRKKAVTIDTTALRGNYCFNARSSIQSIDFKHSKFSQPVCMQLNYEGEWKFPFSATIPVFVLLILLTSASIIWLLKQDAKHKKMPQTLDLSNCKIAGPTFCCELRENEFLTDCLICTDKPMSQGKKNKTLAQNNQMWMASFLPSSSSEEEEEEEEEDSSSFIPYTEMLQFPRKHFNFQTPRTADAETILDSTSGVLSVVGGSTLDLSALGFSFFPIRKNEMDTSGSQGNEKASHSHSSSLGRISLTDVRFPGPREHGQHGTDSNDCLEVSLLHTLMNSSCTRLPADEHCLYKKDHDFTICYQKPTLDQPVQVSENPLLNEDPSMEKFIYLQTLQVAEDEGFASDCDSGNFTEGTPPASTVLSDELRISDMEKRYDKKFKFKGYQHSHYMRRS.

Residues 1-22 (MSAWRIRVLATLCFLWQPRVHG) form the signal peptide. Residues 23 to 229 (QLPPPQNVTL…YEGEWKFPFS (207 aa)) are Extracellular-facing. In terms of domain architecture, Fibronectin type-III spans 26–121 (PPQNVTLLSK…KSQFKEYHLD (96 aa)). A glycan (N-linked (GlcNAc...) asparagine) is linked at Asn-29. 3 cysteine pairs are disulfide-bonded: Cys-74–Cys-82, Cys-86–Cys-149, and Cys-193–Cys-215. An N-linked (GlcNAc...) asparagine glycan is attached at Asn-141. A helical transmembrane segment spans residues 230–250 (ATIPVFVLLILLTSASIIWLL). Residues 251–567 (KQDAKHKKMP…YQHSHYMRRS (317 aa)) are Cytoplasmic-facing.

This sequence belongs to the type II cytokine receptor family. Heterodimer with IL10RB.

It is found in the membrane. In terms of biological role, the IFNLR1/IL10RB dimer is a receptor for the cytokine ligands IFNL2 and IFNL3 and mediates their antiviral activity. The ligand/receptor complex stimulate the activation of the JAK/STAT signaling pathway leading to the expression of IFN-stimulated genes (ISG), which contribute to the antiviral state. Determines the cell type specificity of the lambda interferon action. Shows a more restricted pattern of expression in the epithelial tissues thereby limiting responses to lambda interferons primarily to epithelial cells of the respiratory, gastrointestinal, and reproductive tracts. The chain is Interferon lambda receptor 1 (IFNLR1) from Gallus gallus (Chicken).